Consider the following 291-residue polypeptide: MRKLMTATAALCACAVTVSAGAAWADADVQPAGSVPIPDGPAQTWIVADLDSGQVLAGRDQNVAHPPASTIKVLLALVALDELDLNSTVVADVADTQAECNCVGVKPGRSYTARQLLDGLLLVSGNDAANTLAHMLGGQDVTVAKMNAKAATLGATSTHATTPSGLDGPGGSGASTAHDLVVIFRAAMANPVFAQITAEPSAMFPSDNGEQLIVNQDELLQRYPGAIGGKTGYTNAARKTFVGAAARGGRRLVIAMMYGLVKEGGPTYWDQAATLFDWGFALNPQASVGSL.

An N-terminal signal peptide occupies residues 1-22 (MRKLMTATAALCACAVTVSAGA). S69 functions as the Acyl-ester intermediate in the catalytic mechanism. K72 serves as the catalytic Proton acceptor. Residue S124 is part of the active site.

The protein belongs to the peptidase S11 family.

It localises to the periplasm. Its pathway is cell wall biogenesis; peptidoglycan biosynthesis. Inhibited by the beta-lactam antibiotic meropenem. Inhibited by the non-specific inhibitor phenylmethylsulfonyl fluoride (PMSF). Its function is as follows. Probably cleaves the terminal D-Ala-D-Ala dipeptide of the peptidoglycan stem peptide. Shows significant D,D-carboxypeptidase activity in vitro. Acts on the synthetic penta-peptide substrate Penta-DAP (L-Ala-gamma-D-Gln-DAP-D-Ala-D-Ala). Also shows weak activity on Penta-Lys (L-Ala-gamma-Glu-L-Lys-D-Ala-D-Ala). The catalytic domain binds weakly to peptidoglycan in vitro. Plays an important role in the maintenance of colony morphology and cell wall permeability and integrity. This Mycobacterium tuberculosis (strain ATCC 25618 / H37Rv) protein is D-alanyl-D-alanine carboxypeptidase DacB2.